Reading from the N-terminus, the 595-residue chain is Ketol-acid reductoisomerase, chloroplastic (595 aa).

Residues 1 to 72 (MAATAATTFS…GGGSALSAQM (72 aa)) constitute a chloroplast transit peptide. The KARI N-terminal Rossmann domain maps to 108–306 (VRGGRNLFPL…ALGSPFTFAT (199 aa)). NADP(+)-binding positions include 129–136 (GVIGWGSQ), 162–167 (RKGSNS), and 201–205 (SDSAQ). The active site involves His226. KARI C-terminal knotted domains follow at residues 307–455 (TLEQ…RPAG) and 456–592 (DLGP…RPEL). 4 residues coordinate Mg(2+): Asp315, Glu319, Glu492, and Glu496. A substrate-binding site is contributed by Ser518.

The protein belongs to the ketol-acid reductoisomerase family. As to quaternary structure, homodimer. Mg(2+) is required as a cofactor.

Its subcellular location is the plastid. It localises to the chloroplast. It catalyses the reaction (2R)-2,3-dihydroxy-3-methylbutanoate + NADP(+) = (2S)-2-acetolactate + NADPH + H(+). It carries out the reaction (2R,3R)-2,3-dihydroxy-3-methylpentanoate + NADP(+) = (S)-2-ethyl-2-hydroxy-3-oxobutanoate + NADPH + H(+). It functions in the pathway amino-acid biosynthesis; L-isoleucine biosynthesis; L-isoleucine from 2-oxobutanoate: step 2/4. Its pathway is amino-acid biosynthesis; L-valine biosynthesis; L-valine from pyruvate: step 2/4. This chain is Ketol-acid reductoisomerase, chloroplastic (AHRI), found in Spinacia oleracea (Spinach).